The following is a 70-amino-acid chain: Enhancer of split m6 protein (70 aa).

This Drosophila melanogaster (Fruit fly) protein is Enhancer of split m6 protein.